The following is a 254-amino-acid chain: MAYVSMKQMLETGVHFGHQTRRWNPKMRPFIFGARNGIHIIDLQQTVKMFRVAHDKVVDTVANGGRVMFIGTKRQAQEAVATEAGRAGQFYVTNRWMGGTLTNFFTIQKSIDRLKKLEAMFADGTVNRYQKKEILRLQREMDKLLATLGGIKDMDKLPQLAFVIDPHREDIAIKECRKLGIPIVAVTDTNCDPDLIDFVIPGNDDAIRAIKLFVAAIADACLEGDALRKERKGQDAEEELKKASEPKAAEAAAE.

Over residues 228–248 (RKERKGQDAEEELKKASEPKA) the composition is skewed to basic and acidic residues. The interval 228-254 (RKERKGQDAEEELKKASEPKAAEAAAE) is disordered.

It belongs to the universal ribosomal protein uS2 family.

In Nitratidesulfovibrio vulgaris (strain ATCC 29579 / DSM 644 / CCUG 34227 / NCIMB 8303 / VKM B-1760 / Hildenborough) (Desulfovibrio vulgaris), this protein is Small ribosomal subunit protein uS2.